A 513-amino-acid chain; its full sequence is ATP synthase subunit alpha (513 aa).

An ATP-binding site is contributed by 169–176; that stretch reads GDRQTGKT.

Belongs to the ATPase alpha/beta chains family. As to quaternary structure, F-type ATPases have 2 components, CF(1) - the catalytic core - and CF(0) - the membrane proton channel. CF(1) has five subunits: alpha(3), beta(3), gamma(1), delta(1), epsilon(1). CF(0) has three main subunits: a(1), b(2) and c(9-12). The alpha and beta chains form an alternating ring which encloses part of the gamma chain. CF(1) is attached to CF(0) by a central stalk formed by the gamma and epsilon chains, while a peripheral stalk is formed by the delta and b chains.

It is found in the cell inner membrane. The enzyme catalyses ATP + H2O + 4 H(+)(in) = ADP + phosphate + 5 H(+)(out). Functionally, produces ATP from ADP in the presence of a proton gradient across the membrane. The alpha chain is a regulatory subunit. The polypeptide is ATP synthase subunit alpha (Actinobacillus pleuropneumoniae serotype 7 (strain AP76)).